The primary structure comprises 327 residues: GMP reductase (327 aa).

Residue Cys176 is the Thioimidate intermediate of the active site. Residue 205–228 (IIADGGIRTHGDIAKSIRFGASMV) coordinates NADP(+).

This sequence belongs to the IMPDH/GMPR family. GuaC type 2 subfamily.

The catalysed reaction is IMP + NH4(+) + NADP(+) = GMP + NADPH + 2 H(+). Catalyzes the irreversible NADPH-dependent deamination of GMP to IMP. It functions in the conversion of nucleobase, nucleoside and nucleotide derivatives of G to A nucleotides, and in maintaining the intracellular balance of A and G nucleotides. This Streptococcus suis (strain 98HAH33) protein is GMP reductase.